The following is a 40-amino-acid chain: Natriuretic peptide PaNP-b (40 aa).

A disulfide bond links C9 and C25. Residues 36–40 (IPGGS) constitute a propeptide that is removed on maturation.

The protein belongs to the natriuretic peptide family. As to expression, expressed by the venom gland.

It localises to the secreted. In terms of biological role, snake venom natriuretic peptide that targets both NPR1 and NPR2. Exhibits hypotensive and vasodepressor activities. In Pseudechis australis (Mulga snake), this protein is Natriuretic peptide PaNP-b.